The following is a 594-amino-acid chain: DELLA protein 1 (594 aa).

Residues 1 to 36 (MKREHQESFGGGVISNNNKTNTNHLNSSKNINFGEC) are disordered. Residues 15–30 (SNNNKTNTNHLNSSKN) are compositionally biased toward low complexity. The DELLA motif signature appears at 61-65 (DELLA). The region spanning 207-587 (VDTQETGVRL…RSLIATSAWK (381 aa)) is the GRAS domain. Residues 214-268 (VRLVHTLMACAEAIQQKNLKLAEALVKHISLLASLQTGAMRKVASYFAQALARRI) form a leucine repeat I (LRI) region. The tract at residues 216–253 (LVHTLMACAEAIQQKNLKLAEALVKHISLLASLQTGAM) is required for possible homodimerization. Positions 221 to 225 (MACAE) match the LxCxE motif; degenerate motif. A VHIID region spans residues 285 to 350 (HMHFYESSPY…GGPPTFRLTG (66 aa)). The VHIID motif lies at 316–320 (VHVID). The tract at residues 364–396 (QVGWKLAQLAQTIGVQFEFRGFVCNSIADLDPN) is leucine repeat II (LRII). Positions 406-508 (VAVNSVFELH…EIYLGKQICN (103 aa)) are PFYRE. An LXXLL motif; degenerate motif is present at residues 414 to 418 (LHTML). An SAW region spans residues 511–587 (AYEGVDRVER…RSLIATSAWK (77 aa)).

This sequence belongs to the GRAS family. DELLA subfamily. May be a homodimer. Ubiquitinated. Upon GA application it is ubiquitinated, leading to its subsequent degradation. As to expression, strongly expressed in the vascular tissue and endodermis but barely in the inner cortical cells where arbuscule are formed during arbuscular mycorrhizal (AM) symbiosis.

The protein localises to the nucleus. Functionally, probable transcriptional regulator that acts as a repressor of the gibberellin (GA) signaling pathway. Probably acts by participating in large multiprotein complexes that repress transcription of GA-inducible genes. Upon GA application, it is degraded by the proteasome, allowing the GA signaling pathway. Together with DELLA2, required to enable arbuscule development during arbuscular mycorrhizal (AM) symbiosis with AM fungi (e.g. Glomus versiforme) via the regulation of RAM1 which, in turn, regulates various AM genes (e.g. NSP1, NSP2, PT4, LEC5, RAM2, EXO70I, STR and RAD1). The protein is DELLA protein 1 of Medicago truncatula (Barrel medic).